Consider the following 117-residue polypeptide: Multidrug resistance protein EbrB (117 aa).

The next 4 helical transmembrane spans lie at Gly3–Leu23, Trp31–Leu51, Ala59–Phe79, and Glu81–Leu101.

The protein belongs to the drug/metabolite transporter (DMT) superfamily. Small multidrug resistance (SMR) (TC 2.A.7.1) family. EbrA/EbrB subfamily. In terms of assembly, the efflux pump is composed of EbrA and EbrB.

Its subcellular location is the cell membrane. Functionally, part of a multidrug efflux pump. Confers resistance to cationic lipophilic dyes such as ethidium bromide, acriflavine, pyronine Y and safranin O. The efflux is probably coupled to an influx of protons. In Bacillus subtilis (strain 168), this protein is Multidrug resistance protein EbrB (ebrB).